An 859-amino-acid chain; its full sequence is DNA mismatch repair protein MutS (859 aa).

622-629 (GPNMGGKS) lines the ATP pocket.

It belongs to the DNA mismatch repair MutS family.

This protein is involved in the repair of mismatches in DNA. It is possible that it carries out the mismatch recognition step. This protein has a weak ATPase activity. The chain is DNA mismatch repair protein MutS from Coxiella burnetii (strain Dugway 5J108-111).